Consider the following 105-residue polypeptide: Small ribosomal subunit protein eS25 (105 aa).

Belongs to the eukaryotic ribosomal protein eS25 family. Component of the small ribosomal subunit. Mature ribosomes consist of a small (40S) and a large (60S) subunit. The 40S subunit contains about 32 different proteins and 1 molecule of RNA (18S). The 60S subunit contains 45 different proteins and 3 molecules of RNA (25S, 5.8S and 5S).

The protein localises to the cytoplasm. Component of the ribosome, a large ribonucleoprotein complex responsible for the synthesis of proteins in the cell. The small ribosomal subunit (SSU) binds messenger RNAs (mRNAs) and translates the encoded message by selecting cognate aminoacyl-transfer RNA (tRNA) molecules. The large subunit (LSU) contains the ribosomal catalytic site termed the peptidyl transferase center (PTC), which catalyzes the formation of peptide bonds, thereby polymerizing the amino acids delivered by tRNAs into a polypeptide chain. The nascent polypeptides leave the ribosome through a tunnel in the LSU and interact with protein factors that function in enzymatic processing, targeting, and the membrane insertion of nascent chains at the exit of the ribosomal tunnel. The sequence is that of Small ribosomal subunit protein eS25 (RPS25B) from Candida albicans (strain SC5314 / ATCC MYA-2876) (Yeast).